The following is a 391-amino-acid chain: MVEADRPGKLFIGGLNTETNEKALEAVFGKYGRIVEVLLMKDRETNKSRGFAFVTFESPADAKDAARDMNGKSLDGKAIKVEQATKPSFESGRRGPPPPPRSRGPPRGLRGGRGGSGGTRGPPSRGGHMDDGGYSMNFNMSSSRGPLPVKRGPPPRSGGPPPKRSAPSGPVRSSSGMGGRAPVSRGRDSYGGPPRREPLPSRRDVYLSPRDDGYSTKDSYSSRDYPSSRDTRDYAPPPRDYTYRDYGHSSSRDDYPSRGYSDRDGYGRDRDYSDHPSGGSYRDSYESYGNSRSAPPTRGPPPSYGGSSRYDDYSSSRDGYGGSRDSYSSSRSDLYSSGRDRVGRQDRGLPPSMERGYPPPRDSYSSSSRGAPRGGGRGGSRSDRGGGRSRY.

Position 1 is an N-acetylmethionine; in Heterogeneous nuclear ribonucleoprotein G; alternate (M1). At V2 the chain carries N-acetylvaline; in Heterogeneous nuclear ribonucleoprotein G, N-terminally processed. The RRM domain occupies 8–86 (GKLFIGGLNT…KAIKVEQATK (79 aa)). A Glycyl lysine isopeptide (Lys-Gly) (interchain with G-Cter in SUMO2) cross-link involves residue K22. N6-acetyllysine is present on K30. Over residues 61–80 (DAKDAARDMNGKSLDGKAIK) the composition is skewed to basic and acidic residues. Positions 61-391 (DAKDAARDMN…SDRGGGRSRY (331 aa)) are disordered. Glycyl lysine isopeptide (Lys-Gly) (interchain with G-Cter in SUMO2) cross-links involve residues K80 and K86. S88 and S91 each carry phosphoserine. The segment covering 109–120 (LRGGRGGSGGTR) has biased composition (gly residues). R125, R144, and R164 each carry omega-N-methylarginine. The span at 151–164 (RGPPPRSGGPPPKR) shows a compositional bias: pro residues. A Phosphoserine modification is found at S165. Position 172 is an omega-N-methylarginine (R172). S174 bears the Phosphoserine mark. The interval 186-236 (GRDSYGGPPRREPLPSRRDVYLSPRDDGYSTKDSYSSRDYPSSRDTRDYAP) is necessary for the association to nascent RNAPII transcripts and nuclear localization. Composition is skewed to basic and acidic residues over residues 194-215 (PRRE…DGYS) and 241-274 (YTYR…DYSD). 5 positions are modified to phosphoserine: S261, S328, S329, S330, and S332. Over residues 323-337 (SRDSYSSSRSDLYSS) the composition is skewed to low complexity. The interval 333-391 (DLYSSGRDRVGRQDRGLPPSMERGYPPPRDSYSSSSRGAPRGGGRGGSRSDRGGGRSRY) is necessary for RNA-binding. Basic and acidic residues predominate over residues 338–347 (GRDRVGRQDR). S352 bears the Phosphoserine mark. The segment covering 362–371 (DSYSSSSRGA) has biased composition (low complexity). Positions 380 to 391 (SRSDRGGGRSRY) are enriched in basic and acidic residues.

As to quaternary structure, homomultimer. Found in the supraspliceosome complex. Identified in the spliceosome C complex. Forms a complex with ILF2, ILF3, YLPM1, KHDRBS1, NCOA5 and PPP1CA. Interacts with CLK2, KHDRBS2, KHDRBS3, SAFB/SAFB1, TRA2B and YTHDC1. Interacts with ERAP1; the interaction is RNA-independent. Interacts with PPIA/CYPA. O-glycosylated. Post-translationally, arg-185 is dimethylated, probably to asymmetric dimethylarginine.

Its subcellular location is the nucleus. In terms of biological role, RNA-binding protein that plays several role in the regulation of pre- and post-transcriptional processes. Implicated in tissue-specific regulation of gene transcription and alternative splicing of several pre-mRNAs. Binds to and stimulates transcription from the tumor suppressor TXNIP gene promoter; may thus be involved in tumor suppression. When associated with SAFB, binds to and stimulates transcription from the SREBF1 promoter. Associates with nascent mRNAs transcribed by RNA polymerase II. Component of the supraspliceosome complex that regulates pre-mRNA alternative splice site selection. Can either activate or suppress exon inclusion; acts additively with TRA2B to promote exon 7 inclusion of the survival motor neuron SMN. Represses the splicing of MAPT/Tau exon 10. Binds preferentially to single-stranded 5'-CC[A/C]-rich RNA sequence motifs localized in a single-stranded conformation; probably binds RNA as a homodimer. Binds non-specifically to pre-mRNAs. Also plays a role in the cytoplasmic TNFR1 trafficking pathways; promotes both the IL-1-beta-mediated inducible proteolytic cleavage of TNFR1 ectodomains and the release of TNFR1 exosome-like vesicles to the extracellular compartment. This is RNA-binding motif protein, X chromosome (RBMX) from Macaca fascicularis (Crab-eating macaque).